The sequence spans 569 residues: Mitochondrial import receptor subunit tomm-70 (569 aa).

The Mitochondrial intermembrane segment spans residues 1-12 (MVETTGISDQTK). The chain crosses the membrane as a helical span at residues 13 to 32 (KVLIGVAAAATVAGVGYLVY). Over 33-569 (KSFGGSDLER…KRAAEMLDMY (537 aa)) the chain is Cytoplasmic. 4 TPR repeats span residues 44–77 (LEEI…AGPN), 119–152 (TKAY…DSSL), 221–254 (DQKQ…PPAM), and 510–544 (LHLL…APPR).

It belongs to the Tom70 family. Forms part of the preprotein translocase complex of the outer mitochondrial membrane (TOM complex). As to expression, expressed in body wall muscle cells, the pharynx and structures in the tail.

The protein localises to the mitochondrion outer membrane. In terms of biological role, receptor that accelerates the import of all mitochondrial precursor proteins. In Caenorhabditis elegans, this protein is Mitochondrial import receptor subunit tomm-70.